A 304-amino-acid polypeptide reads, in one-letter code: Syntaxin-132 (304 aa).

M1 carries the post-translational modification N-acetylmethionine. The disordered stretch occupies residues 1–30 (MNDLLKGSFELPRGQSSREGDVELGEQQGG). Topologically, residues 1–275 (MNDLLKGSFE…AKSLQKNSRK (275 aa)) are cytoplasmic. 2 coiled-coil regions span residues 34-67 (LEDF…ESKS) and 129-162 (TLSL…DRRV). The t-SNARE coiled-coil homology domain maps to 204-266 (LAEIQERHDA…QSGNTALQRA (63 aa)). Residues 276–296 (WMCIAIIILLIVVAVIVVGVL) form a helical; Anchor for type IV membrane protein membrane-spanning segment. The Vesicular segment spans residues 297–304 (KPWKNKSA).

It belongs to the syntaxin family. As to quaternary structure, part of the t-SNARE complex. Widely expressed in all tissues throughout plant development.

The protein localises to the cell membrane. In terms of biological role, vesicle trafficking protein that functions in the secretory pathway. Acts in coordination with SYP123 to mediate tip-focused membrane trafficking for root hair tip growth. Functions in root hair elongation by forming SNARE complexes with VAMP721,VAMP722 or VAMP724. Involved in cytokinesis. Acts as a cell plate-specific syntaxin, required for the fusion of vesicles at the plane of cell division. Required for secretory trafficking to the plasma membrane during interphase. Involved in the regulation of density of the H(+) ATPase proteins at the plasma membrane of root and shoot in epidermal cells. Modulation of SYP132 expression by auxin affects clathrin-sensitive H(+) ATPase traffic from the plasma membrane, and influences apoplastic acidification and plant growth. This is Syntaxin-132 from Arabidopsis thaliana (Mouse-ear cress).